We begin with the raw amino-acid sequence, 199 residues long: uncharacterized protein (199 aa).

Helical transmembrane passes span 1 to 21 (MEQF…TFIF), 28 to 48 (IAVS…IALY), 51 to 71 (LNAA…YLGM), 83 to 103 (LVAA…WFII), 127 to 147 (QLVL…FVIQ), and 154 to 174 (AVGG…LFGI).

The protein localises to the cell membrane. This is an uncharacterized protein from Bacillus subtilis (strain 168).